The primary structure comprises 518 residues: Serine--tRNA ligase, mitochondrial (518 aa).

The N-terminal 34 residues, 1-34, are a transit peptide targeting the mitochondrion; the sequence is MAASMARLWWPFLARQGLRSRGRCVCSQNPRRSF. Lysine 110 bears the N6-acetyllysine mark. Residue lysine 195 is modified to N6-succinyllysine. Residue 299-301 participates in L-serine binding; it reads TAE. Residue 330-332 coordinates ATP; sequence RAE. Residue lysine 337 is modified to N6-succinyllysine. Valine 345 contributes to the ATP binding site. Residue glutamate 352 coordinates L-serine. 418–421 contacts ATP; that stretch reads EVTS. Threonine 453 provides a ligand contact to L-serine. The segment at 497-518 is disordered; that stretch reads PLQYIGPNQPQKPRLPGQSATR.

It belongs to the class-II aminoacyl-tRNA synthetase family. Type-1 seryl-tRNA synthetase subfamily. As to quaternary structure, homodimer. The tRNA molecule probably binds across the dimer. In terms of tissue distribution, ubiquitous.

It is found in the mitochondrion matrix. It carries out the reaction tRNA(Ser) + L-serine + ATP = L-seryl-tRNA(Ser) + AMP + diphosphate + H(+). It catalyses the reaction tRNA(Sec) + L-serine + ATP = L-seryl-tRNA(Sec) + AMP + diphosphate + H(+). It functions in the pathway aminoacyl-tRNA biosynthesis; selenocysteinyl-tRNA(Sec) biosynthesis; L-seryl-tRNA(Sec) from L-serine and tRNA(Sec): step 1/1. Catalyzes the attachment of serine to tRNA(Ser). Is also probably able to aminoacylate tRNA(Sec) with serine, to form the misacylated tRNA L-seryl-tRNA(Sec), which will be further converted into selenocysteinyl-tRNA(Sec). This Mus musculus (Mouse) protein is Serine--tRNA ligase, mitochondrial (Sars2).